A 289-amino-acid chain; its full sequence is Ribosomal RNA small subunit methyltransferase A (289 aa).

6 residues coordinate S-adenosyl-L-methionine: N21, L23, G48, E69, D94, and N120.

Belongs to the class I-like SAM-binding methyltransferase superfamily. rRNA adenine N(6)-methyltransferase family. RsmA subfamily.

The protein resides in the cytoplasm. The catalysed reaction is adenosine(1518)/adenosine(1519) in 16S rRNA + 4 S-adenosyl-L-methionine = N(6)-dimethyladenosine(1518)/N(6)-dimethyladenosine(1519) in 16S rRNA + 4 S-adenosyl-L-homocysteine + 4 H(+). In terms of biological role, specifically dimethylates two adjacent adenosines (A1518 and A1519) in the loop of a conserved hairpin near the 3'-end of 16S rRNA in the 30S particle. May play a critical role in biogenesis of 30S subunits. This is Ribosomal RNA small subunit methyltransferase A from Actinobacillus pleuropneumoniae serotype 5b (strain L20).